The chain runs to 315 residues: Homoserine kinase (315 aa).

Residue 97-107 coordinates ATP; the sequence is PPARGLGSSAT.

Belongs to the GHMP kinase family. Homoserine kinase subfamily.

The protein resides in the cytoplasm. It carries out the reaction L-homoserine + ATP = O-phospho-L-homoserine + ADP + H(+). The protein operates within amino-acid biosynthesis; L-threonine biosynthesis; L-threonine from L-aspartate: step 4/5. Catalyzes the ATP-dependent phosphorylation of L-homoserine to L-homoserine phosphate. The sequence is that of Homoserine kinase from Synechococcus sp. (strain WH7803).